The following is a 274-amino-acid chain: Urease accessory protein UreD (274 aa).

The protein belongs to the UreD family. UreD, UreF and UreG form a complex that acts as a GTP-hydrolysis-dependent molecular chaperone, activating the urease apoprotein by helping to assemble the nickel containing metallocenter of UreC. The UreE protein probably delivers the nickel.

The protein localises to the cytoplasm. Functionally, required for maturation of urease via the functional incorporation of the urease nickel metallocenter. This Klebsiella pneumoniae subsp. pneumoniae (strain ATCC 700721 / MGH 78578) protein is Urease accessory protein UreD.